The primary structure comprises 274 residues: MGIVIAVYGKGGIGKSTNSANLSTALAMKGASVLQIGCDPKHDSTFPITGHLQKTVIEVLEEVGFHHEEVMFEDVVKKGFANVDAIEAGGPPAGSGCGGYVVGETVKLLQEFGVYDKYDVILFDVLGDVVCGGFSAPLNYADYALIVATNDFDSIFAANRLCMAIEQKSARSKVQLAGIIGNKVDYVNGGGTNVLDKFADKVNTKVVAKVPMHDLIRRSRLAGKTLFQMEEDGQDVCIAPYLALAEQLLSEKPFATVPKSLGDREIFELMGGWM.

Residues 12–17 and Lys-41 contribute to the ATP site; that span reads GIGKST. A Mg(2+)-binding site is contributed by Ser-16. [4Fe-4S] cluster is bound by residues Cys-97 and Cys-131.

It belongs to the NifH/BchL/ChlL family. In terms of assembly, homodimer. Protochlorophyllide reductase is composed of three subunits; BchL, BchN and BchB. The cofactor is [4Fe-4S] cluster.

It catalyses the reaction chlorophyllide a + oxidized 2[4Fe-4S]-[ferredoxin] + 2 ADP + 2 phosphate = protochlorophyllide a + reduced 2[4Fe-4S]-[ferredoxin] + 2 ATP + 2 H2O. It functions in the pathway porphyrin-containing compound metabolism; bacteriochlorophyll biosynthesis (light-independent). Functionally, component of the dark-operative protochlorophyllide reductase (DPOR) that uses Mg-ATP and reduced ferredoxin to reduce ring D of protochlorophyllide (Pchlide) to form chlorophyllide a (Chlide). This reaction is light-independent. The L component serves as a unique electron donor to the NB-component of the complex, and binds Mg-ATP. The protein is Light-independent protochlorophyllide reductase iron-sulfur ATP-binding protein of Chloroherpeton thalassium (strain ATCC 35110 / GB-78).